We begin with the raw amino-acid sequence, 701 residues long: SH3 domain-binding protein 1 (701 aa).

Residues 1 to 10 (MMKRQLHRMR) show a composition bias toward basic residues. Disordered regions lie at residues 1 to 23 (MMKR…RTPE) and 160 to 182 (SQAT…HSHT). The segment at 1 to 275 (MMKRQLHRMR…TATHFPRVYG (275 aa)) is interaction with CGNL1. The region spanning 17 to 262 (SLGRTPETAE…RENHGQADHS (246 aa)) is the BAR domain. 4 positions are modified to phosphoserine: Ser-175, Ser-241, Ser-262, and Ser-264. In terms of domain architecture, Rho-GAP spans 276-469 (VSLATHLQEL…ALIQSADTLF (194 aa)). The interval 470–701 (PGDINFNVSG…RPRSLASETN (232 aa)) is interaction with CD2AP. Residues 496–701 (SEELPSTAVP…RPRSLASETN (206 aa)) form a disordered region. Pro residues predominate over residues 508 to 522 (ATTPAPAPAPAPAPA). Phosphoserine is present on residues Ser-544 and Ser-550. 2 stretches are compositionally biased toward pro residues: residues 570–579 (PARPTMPPPQ) and 587–596 (PPAPPLPPGS). Thr-601 carries the post-translational modification Phosphothreonine. The SH3-binding motif lies at 616-625 (APTVPPPLPP). Composition is skewed to pro residues over residues 618–630 (TVPP…PPQP) and 641–652 (SPSPASPGPASP). A Phosphothreonine modification is found at Thr-626. The residue at position 653 (Ser-653) is a Phosphoserine. The segment covering 666–677 (GAATAEGGAPEA) has biased composition (low complexity). Pro residues predominate over residues 682 to 692 (PTPPAIPPQPR).

In terms of assembly, interacts with RAC1. Interacts with the exocyst via EXOC4 and EXOC8; required for the localization of both SH3BP1 and the exocyst to the leading edge of migrating cells. Interacts with CD2AP and CGNL1; probably part of a complex at cell junctions. Interacts with CAPZA1; recruits CAPZA1 to forming cell junctions. May interact with AFDN. Interacts with PLXND1; they dissociate upon SEMA3E binding to PLXND1 allowing SH3BP1 to transduce downstream signal through RAC1 inactivation. Interacts with ABL1, GRB2 and SRC (via SH3 domain).

Its subcellular location is the cell projection. The protein resides in the cell junction. It localises to the tight junction. It is found in the adherens junction. The protein localises to the phagocytic cup. Its subcellular location is the nucleus. The protein resides in the cytoplasm. It localises to the cytosol. GTPase activating protein (GAP) which specifically converts GTP-bound Rho-type GTPases including RAC1 and CDC42 in their inactive GDP-bound form. By specifically inactivating RAC1 at the leading edge of migrating cells, it regulates the spatiotemporal organization of cell protrusions which is important for proper cell migration. Also negatively regulates CDC42 in the process of actin remodeling and the formation of epithelial cell junctions. Through its GAP activity toward RAC1 and/or CDC42 plays a specific role in phagocytosis of large particles. Specifically recruited by a PI3 kinase/PI3K-dependent mechanism to sites of large particles engagement, inactivates RAC1 and/or CDC42 allowing the reorganization of the underlying actin cytoskeleton required for engulfment. It also plays a role in angiogenesis and the process of repulsive guidance as part of a semaphorin-plexin signaling pathway. Following the binding of PLXND1 to extracellular SEMA3E it dissociates from PLXND1 and inactivates RAC1, inducing the intracellular reorganization of the actin cytoskeleton and the collapse of cells. The sequence is that of SH3 domain-binding protein 1 from Homo sapiens (Human).